The following is a 132-amino-acid chain: MTMTDPIADMLTRVRNANMVRHEKLELPASNIKKQIAEILKSEGFIKNVEYVEDDKQGVIRLFLKYGQNNERVITGLKRISKPGLRVYAKANEVPKVLNGLGIALVSTSEGVITDKEARKRNVGGEIIAYVW.

The protein belongs to the universal ribosomal protein uS8 family. Part of the 30S ribosomal subunit. Contacts proteins S5 and S12.

Functionally, one of the primary rRNA binding proteins, it binds directly to 16S rRNA central domain where it helps coordinate assembly of the platform of the 30S subunit. The chain is Small ribosomal subunit protein uS8 from Staphylococcus haemolyticus (strain JCSC1435).